A 266-amino-acid polypeptide reads, in one-letter code: Ribosomal RNA small subunit methyltransferase A (266 aa).

Residues His-13, Leu-15, Gly-40, Glu-61, Asp-85, and Asn-104 each contribute to the S-adenosyl-L-methionine site.

The protein belongs to the class I-like SAM-binding methyltransferase superfamily. rRNA adenine N(6)-methyltransferase family. RsmA subfamily.

It is found in the cytoplasm. It catalyses the reaction adenosine(1518)/adenosine(1519) in 16S rRNA + 4 S-adenosyl-L-methionine = N(6)-dimethyladenosine(1518)/N(6)-dimethyladenosine(1519) in 16S rRNA + 4 S-adenosyl-L-homocysteine + 4 H(+). In terms of biological role, specifically dimethylates two adjacent adenosines (A1518 and A1519) in the loop of a conserved hairpin near the 3'-end of 16S rRNA in the 30S particle. May play a critical role in biogenesis of 30S subunits. This chain is Ribosomal RNA small subunit methyltransferase A, found in Parabacteroides distasonis (strain ATCC 8503 / DSM 20701 / CIP 104284 / JCM 5825 / NCTC 11152).